Here is a 372-residue protein sequence, read N- to C-terminus: Mannan endo-1,4-beta-mannosidase 8 (372 aa).

Positions 57 and 172 each coordinate substrate. Glutamate 173 (proton donor) is an active-site residue. Tyrosine 253 provides a ligand contact to substrate. Glutamate 293 serves as the catalytic Nucleophile. Tryptophan 335 provides a ligand contact to substrate.

It belongs to the glycosyl hydrolase 5 (cellulase A) family. Expressed in stems and leaves and seeds.

The catalysed reaction is Random hydrolysis of (1-&gt;4)-beta-D-mannosidic linkages in mannans, galactomannans and glucomannans.. This chain is Mannan endo-1,4-beta-mannosidase 8 (MAN8), found in Oryza sativa subsp. japonica (Rice).